Here is a 234-residue protein sequence, read N- to C-terminus: Sugar fermentation stimulation protein homolog (234 aa).

The protein belongs to the SfsA family.

The sequence is that of Sugar fermentation stimulation protein homolog from Idiomarina loihiensis (strain ATCC BAA-735 / DSM 15497 / L2-TR).